A 417-amino-acid chain; its full sequence is Gamma-glutamyl phosphate reductase (417 aa).

It belongs to the gamma-glutamyl phosphate reductase family.

The protein resides in the cytoplasm. The enzyme catalyses L-glutamate 5-semialdehyde + phosphate + NADP(+) = L-glutamyl 5-phosphate + NADPH + H(+). Its pathway is amino-acid biosynthesis; L-proline biosynthesis; L-glutamate 5-semialdehyde from L-glutamate: step 2/2. In terms of biological role, catalyzes the NADPH-dependent reduction of L-glutamate 5-phosphate into L-glutamate 5-semialdehyde and phosphate. The product spontaneously undergoes cyclization to form 1-pyrroline-5-carboxylate. In Escherichia coli O157:H7, this protein is Gamma-glutamyl phosphate reductase.